The chain runs to 250 residues: 2,3-bisphosphoglycerate-dependent phosphoglycerate mutase (250 aa).

Substrate-binding positions include 8–15 (RHGESQWN), 21–22 (TG), R60, 87–90 (ERHY), K98, 114–115 (RR), and 183–184 (GN). Catalysis depends on H9, which acts as the Tele-phosphohistidine intermediate. The active-site Proton donor/acceptor is E87.

It belongs to the phosphoglycerate mutase family. BPG-dependent PGAM subfamily. In terms of assembly, homodimer.

The enzyme catalyses (2R)-2-phosphoglycerate = (2R)-3-phosphoglycerate. It functions in the pathway carbohydrate degradation; glycolysis; pyruvate from D-glyceraldehyde 3-phosphate: step 3/5. Functionally, catalyzes the interconversion of 2-phosphoglycerate and 3-phosphoglycerate. The protein is 2,3-bisphosphoglycerate-dependent phosphoglycerate mutase of Bordetella parapertussis (strain 12822 / ATCC BAA-587 / NCTC 13253).